Here is a 338-residue protein sequence, read N- to C-terminus: MGSLAKKVLLTGGTGFIASHILTELLDAGYQVVVTVRTHDKGRQLLESLSNTGDKAASYVVVEDIAKDGAYDEAIQSISDLDLVVHTASPYHFNYTDPKTDFLDPAIKGTAGLLASIKAYAPTVKRVVLTSSSATIVTPPNHPEVYDETSYGSVTWEEAMVPQVTYRASKIFAERAAFDFIENDKPNFDLVTINPPLVFGPKPRHVTDLKALNTSNHIIRDTMLGKWKDGGAPIAIPFTWVDVRDVAFAHRQALELPEVSGQRFFTVAGHFSNKRIAEAIRATHPELADRLPPSDVPDDLPEGIYGFDNSKSRKVLGMTFRDLNTCVGDAVTSMLEQA.

2 residues coordinate NADP(+): K41 and Y166.

The protein belongs to the NAD(P)-dependent epimerase/dehydratase family. Dihydroflavonol-4-reductase subfamily.

It functions in the pathway secondary metabolite biosynthesis. In terms of biological role, ketoreductase; part of the gene cluster that mediates the biosynthesis of azaphilones, a class of fungal metabolites characterized by a highly oxygenated pyrano-quinone bicyclic core and exhibiting a broad range of bioactivities. In the first step, the non-reducing polyketide synthase azaA forms the hexaketide precursor from successive condensations of five malonyl-CoA units, presumably with a simple acetyl-CoA starter unit. The reactive polyketide chain then undergoes a PT-mediated C2-C7 cyclization to afford the aromatic ring and is eventually released as an aldehyde through the R-domain. The putative ketoreductase azaE is proposed to catalyze the reduction of the terminal ketone resulting in the early culture product FK17-P2a. The monooxygenase azaH was demonstrated to be the only enzyme required to convert FK17-P2a to azanigerone E. AzaH first hydroxylates the benzaldehyde intermediate FK17-P2a at C4, which triggers the formation of the pyran-ring to afford azanigerone E. In parallel, the 2,4-dimethylhexanoyl chain is synthesized by the HR-PKS azaB and is proposed to be transferred to the C4-hydroxyl of azanigerone E by the acyltransferase azaD directly from the ACP domain of azaB. Alternatively, the 2,4-dimethyl-hexanoyl chain may be offloaded from the HR-PKS as a carboxylic acid and converted to an acyl-CoA by azaF. The resulting acyl-CoA molecule could then be taken up as a substrate by AzaD to form azanigerone B. To yield the carboxylic acid substituent in azanigerone A, the hydroxypropyl side chain of azanigerone B would need to undergo a C-C oxidative cleavage catalyzed by cytochrome P450 AzaI. AzaI is proposed to act on a vicinal diol that leads to a C-C bond scission either through an alkoxyradical intermediate or a peroxy complex. In the biosynthesis of azanigerone A, azanigerone B first undergoes hydroxylation at C10, possibly catalyzed by one of the two FAD-dependent monooxygenases encoded in the cluster, azaG or azaL, resulting in the vicinal diol azanigerone C. Oxidative cleavage of azanigerone C by azaI would yield the corresponding aldehyde derivative of azanigerone A. Finally, the dehydrogenase azaJ is proposed to convert the aldehyde functional group into the carboxylic acid, completing the conversion from azanigerone B to azanigerone A. Alternatively, the oxidation of aldehyde to carboxylic acid may be catalyzed by the same P450 enzyme azaI via consecutive oxidation or by endogenous alcohol dehydrogenase. The chain is Ketoreductase azaE from Aspergillus niger (strain ATCC 1015 / CBS 113.46 / FGSC A1144 / LSHB Ac4 / NCTC 3858a / NRRL 328 / USDA 3528.7).